Consider the following 170-residue polypeptide: Probable inosine/xanthosine triphosphatase (170 aa).

Glu31 lines the Mg(2+) pocket.

This sequence belongs to the YjjX NTPase family. In terms of assembly, homodimer. Requires Mg(2+) as cofactor. Mn(2+) serves as cofactor.

The catalysed reaction is XTP + H2O = XDP + phosphate + H(+). It catalyses the reaction ITP + H2O = IDP + phosphate + H(+). Functionally, phosphatase that hydrolyzes non-canonical purine nucleotides such as XTP and ITP to their respective diphosphate derivatives. Probably excludes non-canonical purines from DNA/RNA precursor pool, thus preventing their incorporation into DNA/RNA and avoiding chromosomal lesions. The chain is Probable inosine/xanthosine triphosphatase from Oceanobacillus iheyensis (strain DSM 14371 / CIP 107618 / JCM 11309 / KCTC 3954 / HTE831).